The primary structure comprises 291 residues: 33 kDa chaperonin (291 aa).

Disulfide bonds link Cys237/Cys239 and Cys270/Cys273.

It belongs to the HSP33 family. Post-translationally, under oxidizing conditions two disulfide bonds are formed involving the reactive cysteines. Under reducing conditions zinc is bound to the reactive cysteines and the protein is inactive.

The protein resides in the cytoplasm. In terms of biological role, redox regulated molecular chaperone. Protects both thermally unfolding and oxidatively damaged proteins from irreversible aggregation. Plays an important role in the bacterial defense system toward oxidative stress. The sequence is that of 33 kDa chaperonin from Bacillus cereus (strain G9842).